Consider the following 744-residue polypeptide: Leucine-rich repeat extensin-like protein 1 (744 aa).

The N-terminal stretch at 1-26 (MLFPPLRSLFLFTLLLSSVCFLQIKA) is a signal peptide. 2 N-linked (GlcNAc...) asparagine glycosylation sites follow: Asn71 and Asn77. LRR repeat units lie at residues 122–145 (LSDL…TFNR), 147–170 (KLLY…VLSL), 171–194 (PSLK…LFDR), 196–217 (LDAI…MGNS), 219–240 (VSAL…IGQM), 241–265 (GKTL…IGNL), 266–289 (KKVT…VGNM), 290–313 (KSLE…ICQL), and 315–336 (NLEN…CAAS). Asn253 is a glycosylation site (N-linked (GlcNAc...) asparagine). N-linked (GlcNAc...) asparagine glycans are attached at residues Asn318 and Asn344. Residues 381 to 404 (FSPPPPTFKMSPEVRTLPPPIYVY) form an LRR 10 repeat. The contains the Ser-Pro(4) repeats stretch occupies residues 382–744 (SPPPPTFKMS…ASPPPPPSYY (363 aa)). 4 disordered regions span residues 408–445 (PPPP…PPPP), 518–537 (VYSS…PESS), 555–576 (PSPV…VYYP), and 658–744 (PPPS…PSYY). Positions 430 to 439 (SKMSPSVRAY) are enriched in low complexity. Residues 704–729 (YEPPPEYSYSSSPPPPSPTSYFPPMP) show a composition bias toward pro residues.

Post-translationally, hydroxylated on proline residues in the S-P-P-P-P repeat. In terms of processing, O-glycosylated on hydroxyprolines. As to expression, expressed in root hair cells (at protein level).

Its subcellular location is the secreted. It localises to the cell wall. Modulates cell morphogenesis by regulating cell wall formation and assembly, and/or growth polarization. Together with LRX2, component of the extracellular mechanism regulating root hair morphogenesis and elongation. The protein is Leucine-rich repeat extensin-like protein 1 (LRX1) of Arabidopsis thaliana (Mouse-ear cress).